The primary structure comprises 288 residues: UPF0276 protein VP3015 (288 aa).

Belongs to the UPF0276 family.

The chain is UPF0276 protein VP3015 from Vibrio parahaemolyticus serotype O3:K6 (strain RIMD 2210633).